A 152-amino-acid polypeptide reads, in one-letter code: Dehydratase aurZ (152 aa).

Residues 34–129 (PSLSEKEYRH…APDHVNFADT (96 aa)) form the EthD domain.

It belongs to the tpcK family.

The enzyme catalyses naphtopyrone YWA1 = norrubrofusarin + H2O + H(+). Its pathway is pigment biosynthesis. Its function is as follows. Dehydratase; part of the gene cluster that mediates the biosynthesis of aurofusarin, a red mycelium pigment which is acting as a mycotoxin. The first step is performed by the polyketide synthase which condenses one acetyl-CoA and 6 malonyl-CoA units to form the first intermediate, the cyclic heptaketide and yellow pigment YWA1. The C2 hydroxyl group in the pyrone ring of YWA1 is probably formed during ring closure by an aldol-type cyclization reaction. The dehydratase aurZ then acts as the first tailoring enzyme in the aurofusarin biosynthetic pathway by converting YWA1 to nor-rubrofusarin. Nor-rubrofusarin is then methylated to rubrofusarin by the O-methyltransferase aurJ. Rubrofusarin is then transported across the plasma membrane by the rubrofusarin-specific pump aurT for further enzymatic processing by the extracellular complex composed of GIP1, aurF, aurO and aurS to yield aurofusarin. The polypeptide is Dehydratase aurZ (Gibberella zeae (strain ATCC MYA-4620 / CBS 123657 / FGSC 9075 / NRRL 31084 / PH-1) (Wheat head blight fungus)).